The primary structure comprises 314 residues: uncharacterized protein (314 aa).

Basic and acidic residues predominate over residues 68–91; sequence EKKKKSSSFEKRDKRRVQLKEKSP. 2 disordered regions span residues 68-97 and 141-164; these read EKKK…TPRN and MDVQ…RPAS. Residues 144–157 are compositionally biased toward polar residues; that stretch reads QSPSTMSTSKNNVR.

Its subcellular location is the mitochondrion. This is an uncharacterized protein from Schizosaccharomyces pombe (strain 972 / ATCC 24843) (Fission yeast).